The chain runs to 284 residues: Tropomyosin beta chain (284 aa).

Methionine 1 carries the N-acetylmethionine modification. The tract at residues 1-78 (MDAIKKKMQM…EKLEQAEKKA (78 aa)) is disordered. Residues 1-284 (MDAIKKKMQM…DNALNDITSL (284 aa)) are a coiled coil. 2 stretches are compositionally biased toward basic and acidic residues: residues 12 to 40 (KLDKENAIDRAEQAEADKKQAEDRCKQLE) and 51 to 78 (KGTEDEVEKYSESVKDAQEKLEQAEKKA). Residue threonine 53 is modified to Phosphothreonine. Phosphoserine; by PIK3CG is present on serine 61. Residue threonine 79 is modified to Phosphothreonine. A Phosphoserine modification is found at serine 87. Threonine 108 carries the post-translational modification Phosphothreonine. Residues 117 to 136 (EKAADESERGMKVIENRAMK) are disordered. Serine 158, serine 206, and serine 215 each carry phosphoserine. Threonine 252 is modified (phosphothreonine). Tyrosine 261 carries the phosphotyrosine modification. Serine 271 is modified (phosphoserine). Threonine 282 is subject to Phosphothreonine. Residue serine 283 is modified to Phosphoserine.

It belongs to the tropomyosin family. Homodimer. Heterodimer of an alpha (TPM1, TPM3 or TPM4) and a beta (TPM2) chain. Post-translationally, phosphorylated on Ser-61 by PIK3CG. Phosphorylation on Ser-61 is required for ADRB2 internalization.

The protein resides in the cytoplasm. It localises to the cytoskeleton. Functionally, binds to actin filaments in muscle and non-muscle cells. Plays a central role, in association with the troponin complex, in the calcium dependent regulation of vertebrate striated muscle contraction. Smooth muscle contraction is regulated by interaction with caldesmon. In non-muscle cells is implicated in stabilizing cytoskeleton actin filaments. The non-muscle isoform may have a role in agonist-mediated receptor internalization. This chain is Tropomyosin beta chain (Tpm2), found in Mus musculus (Mouse).